The sequence spans 240 residues: Small ribosomal subunit protein uS3 (240 aa).

The region spanning 39–108 (LRKFLKKKLY…ELILNIKEER (70 aa)) is the KH type-2 domain. A compositionally biased stretch (basic and acidic residues) spans 213 to 224 (MNSDDTATPERK). The tract at residues 213–240 (MNSDDTATPERKAPRRRKGRRNVNAKKN) is disordered. Residues 225 to 240 (APRRRKGRRNVNAKKN) show a composition bias toward basic residues.

Belongs to the universal ribosomal protein uS3 family. Part of the 30S ribosomal subunit. Forms a tight complex with proteins S10 and S14.

Its function is as follows. Binds the lower part of the 30S subunit head. Binds mRNA in the 70S ribosome, positioning it for translation. This chain is Small ribosomal subunit protein uS3, found in Nautilia profundicola (strain ATCC BAA-1463 / DSM 18972 / AmH).